Reading from the N-terminus, the 2210-residue chain is Orsellinic acid synthase ArmB (2210 aa).

The segment at leucine 38–histidine 261 is N-terminal acylcarrier protein transacylase domain (SAT). The Ketosynthase family 3 (KS3) domain maps to glutamine 391–glutamate 817. Active-site for beta-ketoacyl synthase activity residues include cysteine 561, histidine 696, and histidine 736. The segment at valine 915 to glutamine 1240 is malonyl-CoA:ACP transacylase (MAT) domain. Serine 1009 functions as the For acyl/malonyl transferase activity in the catalytic mechanism. The segment at methionine 1307 to aspartate 1437 is N-terminal hotdog fold. The PKS/mFAS DH domain occupies methionine 1307–glutamine 1614. Residues isoleucine 1336–asparagine 1611 are product template (PT) domain. Catalysis depends on histidine 1339, which acts as the Proton acceptor; for dehydratase activity. Positions alanine 1464–glutamine 1614 are C-terminal hotdog fold. Aspartate 1525 serves as the catalytic Proton donor; for dehydratase activity. A Carrier 1 domain is found at valine 1660–valine 1735. Residue serine 1694 is modified to O-(pantetheine 4'-phosphoryl)serine. Residues alanine 1739 to serine 1761 form a disordered region. In terms of domain architecture, Carrier 2 spans serine 1845 to arginine 1922. An O-(pantetheine 4'-phosphoryl)serine modification is found at serine 1882. Residues serine 1920–leucine 1946 are disordered. Acidic residues predominate over residues threonine 1933–serine 1944. Residues valine 1963 to aspartate 2202 are thioesterase (TE) domain.

Its pathway is secondary metabolite biosynthesis. Non-reducing polyketide synthase, part of the gene cluster that mediates the biosynthesis of melleolides, a range of antifungal and phytotoxic polyketide derivatives composed of an orsellinic acid (OA) moiety esterified to various sesquiterpene alcohols. The first step in melleolides biosynthesis is performed by the delta(6)-protoilludene synthase PRO1 which catalyzes the cyclization of farnesyl diphosphate to protoilludene. The orsellinic acid synthase armB produces OA by condensing acetyl-CoA with 3 malonyl-CoA units in a three-round chain elongation reaction folowed by a C2-C7 ring closure. ArmB further catalyzes the trans-esterification of OA to the various sesquiterpene alcohols resulting from the hydroxylation of protoilludene. The melleolides cluster also includes 5 cytochrome P450 monooxygenases, 4 NAD(+)-dependent oxidoreductases, one flavin-dependent oxidoreductase, and one O-methyltransferase. The cytochrome P450 monooxygenases may be involved in protoilludene hydroxylation to elaborate melleolides with multiple alcohol groups, such as melleolide D, which carries alcohol functionalities at C-4, C-5, C-10, and C-13. The role of the NAD(+)-dependent enzymes remains unknown. Numerous melleolides, including arnamial, show 5'-O-methylation of the aromatic moiety which may be catalyzed by the methyltransferase encoded in the cluster. The flavin-dependent oxidoreductase might represent the dehydrogenase yielding the aldehyde in position 1 of arnamial and other melleolides. Finally, several halogenase localized outside of the cluster (armH1 to armH5), are able to catalyze the transfer of a single chlorine atom to the melleolide backbone, resulting in a 6'-chloromelleolide product. The protein is Orsellinic acid synthase ArmB of Armillaria ostoyae (Armillaria root rot fungus).